The following is a 165-amino-acid chain: Cyclic pyranopterin monophosphate synthase (165 aa).

Substrate is bound by residues 75 to 77 (MCH) and 115 to 116 (ME). Residue aspartate 130 is part of the active site.

Belongs to the MoaC family. As to quaternary structure, homohexamer; trimer of dimers.

It carries out the reaction (8S)-3',8-cyclo-7,8-dihydroguanosine 5'-triphosphate = cyclic pyranopterin phosphate + diphosphate. It functions in the pathway cofactor biosynthesis; molybdopterin biosynthesis. Catalyzes the conversion of (8S)-3',8-cyclo-7,8-dihydroguanosine 5'-triphosphate to cyclic pyranopterin monophosphate (cPMP). This is Cyclic pyranopterin monophosphate synthase from Halalkalibacterium halodurans (strain ATCC BAA-125 / DSM 18197 / FERM 7344 / JCM 9153 / C-125) (Bacillus halodurans).